Here is a 168-residue protein sequence, read N- to C-terminus: Photosystem I assembly protein Ycf3 (168 aa).

TPR repeat units lie at residues 35-68 (AFTY…EIDP), 72-105 (SYIL…NPFL), and 120-153 (GEQA…TPGN).

This sequence belongs to the Ycf3 family.

Its subcellular location is the plastid. It is found in the chloroplast thylakoid membrane. Functionally, essential for the assembly of the photosystem I (PSI) complex. May act as a chaperone-like factor to guide the assembly of the PSI subunits. The protein is Photosystem I assembly protein Ycf3 of Acorus calamus var. americanus (American sweet flag).